Reading from the N-terminus, the 295-residue chain is 33 kDa chaperonin (295 aa).

Intrachain disulfides connect Cys-236-Cys-238 and Cys-269-Cys-272.

It belongs to the HSP33 family. Under oxidizing conditions two disulfide bonds are formed involving the reactive cysteines. Under reducing conditions zinc is bound to the reactive cysteines and the protein is inactive.

The protein localises to the cytoplasm. Functionally, redox regulated molecular chaperone. Protects both thermally unfolding and oxidatively damaged proteins from irreversible aggregation. Plays an important role in the bacterial defense system toward oxidative stress. This Citrifermentans bemidjiense (strain ATCC BAA-1014 / DSM 16622 / JCM 12645 / Bem) (Geobacter bemidjiensis) protein is 33 kDa chaperonin.